Here is a 212-residue protein sequence, read N- to C-terminus: MAIVSKGILGKKVGMTQVFTEEGHLIPVTVVEAGPCYVIQKKTKATDGYNAIQVGFGALRERLANKPQKGHVAKASVKPMRYIREFRVDDVEAYEIGQVITAELFAAGDAVDVVGISKGKGFAGMIKRHGASRGPMKHGSKYHRRTGSLGAKGPARVFKGRNLPGRMGGERVTVQNLKVVRVDADKNMILVKGAVPGAKKSLLILKPSVKAK.

The span at 128-146 shows a compositional bias: basic residues; the sequence is RHGASRGPMKHGSKYHRRT. The tract at residues 128–164 is disordered; that stretch reads RHGASRGPMKHGSKYHRRTGSLGAKGPARVFKGRNLP.

The protein belongs to the universal ribosomal protein uL3 family. In terms of assembly, part of the 50S ribosomal subunit. Forms a cluster with proteins L14 and L19.

One of the primary rRNA binding proteins, it binds directly near the 3'-end of the 23S rRNA, where it nucleates assembly of the 50S subunit. This chain is Large ribosomal subunit protein uL3, found in Desulfitobacterium hafniense (strain Y51).